Here is a 131-residue protein sequence, read N- to C-terminus: QRFP-like peptide (131 aa).

The signal sequence occupies residues M1–A25. The propeptide occupies Y26–R94. A disordered region spans residues R48–D131. The segment covering M97 to K106 has biased composition (polar residues). The residue at position 119 (F119) is a Phenylalanine amide. Positions G120–D131 are enriched in basic and acidic residues. The propeptide occupies E123 to D131.

This sequence belongs to the RFamide neuropeptide family.

It is found in the secreted. In terms of biological role, ligand for the G-protein coupled receptor QRFPR. This chain is QRFP-like peptide, found in Branchiostoma floridae (Florida lancelet).